The primary structure comprises 58 residues: Putative calcium channel toxin 196 (58 aa).

The first 16 residues, 1-16 (GSLLLVLFLLSVICYA), serve as a signal peptide directing secretion. Positions 17 to 26 (EIAAGPTKCQ) are excised as a propeptide. Disulfide bonds link cysteine 25/cysteine 38, cysteine 31/cysteine 43, and cysteine 37/cysteine 52.

Belongs to the scorpion calcin-like family. KTX subfamily. As to expression, expressed by the venom gland.

Its subcellular location is the secreted. Its function is as follows. May inhibit voltage-gated potassium channels Kv1.1/KCNA1, hKv1.2/KCNA2, and Kv1.3/KCNA3. May also increase intracellular calcium release through the activation of nuclear inositol 1,4,5-trisphosphate receptors (ITPR) of cardiomyocytes, thereby causing an increase in the contraction frequency of these cells. The protein is Putative calcium channel toxin 196 of Lychas mucronatus (Chinese swimming scorpion).